Here is a 396-residue protein sequence, read N- to C-terminus: 1-deoxy-D-xylulose 5-phosphate reductoisomerase (396 aa).

NADPH contacts are provided by Thr-15, Gly-16, Ser-17, Ile-18, Gly-41, and Asn-130. Lys-131 contacts 1-deoxy-D-xylulose 5-phosphate. Glu-132 provides a ligand contact to NADPH. Asp-155 is a Mn(2+) binding site. Positions 156, 157, 181, and 204 each coordinate 1-deoxy-D-xylulose 5-phosphate. Residue Glu-157 coordinates Mn(2+). Gly-210 serves as a coordination point for NADPH. Ser-217, Asn-222, Lys-223, and Glu-226 together coordinate 1-deoxy-D-xylulose 5-phosphate. Glu-226 provides a ligand contact to Mn(2+).

It belongs to the DXR family. The cofactor is Mg(2+). It depends on Mn(2+) as a cofactor.

It catalyses the reaction 2-C-methyl-D-erythritol 4-phosphate + NADP(+) = 1-deoxy-D-xylulose 5-phosphate + NADPH + H(+). It participates in isoprenoid biosynthesis; isopentenyl diphosphate biosynthesis via DXP pathway; isopentenyl diphosphate from 1-deoxy-D-xylulose 5-phosphate: step 1/6. Catalyzes the NADPH-dependent rearrangement and reduction of 1-deoxy-D-xylulose-5-phosphate (DXP) to 2-C-methyl-D-erythritol 4-phosphate (MEP). The polypeptide is 1-deoxy-D-xylulose 5-phosphate reductoisomerase (Bifidobacterium longum (strain DJO10A)).